Reading from the N-terminus, the 226-residue chain is Thymocyte nuclear protein 1 (226 aa).

The segment at 1–38 (MPRPRKRQTGTAGPDRKKLSGKRTKTENSESTSVKLEN) is disordered. The Nuclear localization signal motif lies at 5-10 (RKRQTG). A compositionally biased stretch (basic and acidic residues) spans 14–28 (PDRKKLSGKRTKTEN). Residues 29-38 (SESTSVKLEN) show a composition bias toward polar residues.

Phosphorylated. As to expression, expressed in the medulla containing mature thymocytes, but not the cortex having immature thymocytes (at protein level). Abundant expression seen in testis, liver, brain and kidney with lower levels of the expression in thymus, spleen, heart and stomach.

It localises to the nucleus. Its function is as follows. Specifically binds 5-hydroxymethylcytosine (5hmC), suggesting that it acts as a specific reader of 5hmC. The chain is Thymocyte nuclear protein 1 (Thyn1) from Mus musculus (Mouse).